The chain runs to 852 residues: Lon protease homolog 2, peroxisomal (852 aa).

At serine 2 the chain carries N-acetylserine. Residues 13–222 enclose the Lon N-terminal domain; that stretch reads LPLLLTHEGV…MTIPLLVRQI (210 aa). Position 375 to 382 (375 to 382) interacts with ATP; it reads GPPGVGKT. The 187-residue stretch at 651–837 folds into the Lon proteolytic domain; it reads LSQPGVAIGL…DEVLNAAFDG (187 aa). Catalysis depends on residues serine 743 and lysine 786. Positions 850 to 852 match the Microbody targeting signal motif; the sequence is SKL.

This sequence belongs to the peptidase S16 family. Interacts with PEX5. Interacts with TYSND1. May interact with enzymes involved in beta-oxidation of fatty acids, including ACOX1/AOX.

It localises to the peroxisome matrix. The enzyme catalyses Hydrolysis of proteins in presence of ATP.. Functionally, ATP-dependent serine protease that mediates the selective degradation of misfolded and unassembled polypeptides in the peroxisomal matrix. Necessary for type 2 peroxisome targeting signal (PTS2)-containing protein processing and facilitates peroxisome matrix protein import. May indirectly regulate peroxisomal fatty acid beta-oxidation through degradation of the self-processed forms of TYSND1. The polypeptide is Lon protease homolog 2, peroxisomal (Pongo abelii (Sumatran orangutan)).